A 255-amino-acid chain; its full sequence is 5'-nucleotidase SurE (255 aa).

Positions 8, 9, 40, and 93 each coordinate a divalent metal cation.

It belongs to the SurE nucleotidase family. A divalent metal cation serves as cofactor.

The protein resides in the cytoplasm. It carries out the reaction a ribonucleoside 5'-phosphate + H2O = a ribonucleoside + phosphate. Nucleotidase that shows phosphatase activity on nucleoside 5'-monophosphates. The polypeptide is 5'-nucleotidase SurE (Bradyrhizobium sp. (strain ORS 278)).